Reading from the N-terminus, the 455-residue chain is Glutamyl-tRNA reductase (455 aa).

Residues 49–52, serine 109, 114–116, and glutamine 120 each bind substrate; these read TCNR and ETQ. The active-site Nucleophile is the cysteine 50. 189-194 serves as a coordination point for NADP(+); that stretch reads GAGKMG.

This sequence belongs to the glutamyl-tRNA reductase family. As to quaternary structure, homodimer.

It carries out the reaction (S)-4-amino-5-oxopentanoate + tRNA(Glu) + NADP(+) = L-glutamyl-tRNA(Glu) + NADPH + H(+). The protein operates within porphyrin-containing compound metabolism; protoporphyrin-IX biosynthesis; 5-aminolevulinate from L-glutamyl-tRNA(Glu): step 1/2. Functionally, catalyzes the NADPH-dependent reduction of glutamyl-tRNA(Glu) to glutamate 1-semialdehyde (GSA). The sequence is that of Glutamyl-tRNA reductase from Bacillus subtilis (strain 168).